Here is a 132-residue protein sequence, read N- to C-terminus: Small ribosomal subunit protein uS11 (132 aa).

It belongs to the universal ribosomal protein uS11 family. Part of the 30S ribosomal subunit. Interacts with proteins S7 and S18. Binds to IF-3.

Its function is as follows. Located on the platform of the 30S subunit, it bridges several disparate RNA helices of the 16S rRNA. Forms part of the Shine-Dalgarno cleft in the 70S ribosome. The chain is Small ribosomal subunit protein uS11 from Chlamydia caviae (strain ATCC VR-813 / DSM 19441 / 03DC25 / GPIC) (Chlamydophila caviae).